The following is a 524-amino-acid chain: GMP synthase [glutamine-hydrolyzing] (524 aa).

Positions 9–207 (RILILDFGSQ…VIHICQCIPN (199 aa)) constitute a Glutamine amidotransferase type-1 domain. The active-site Nucleophile is the C86. Catalysis depends on residues H181 and E183. Positions 208 to 399 (WTTKHIIEDS…LGLPADLIYR (192 aa)) constitute a GMPS ATP-PPase domain. 235–241 (SGGVDSA) contacts ATP.

Homodimer.

The enzyme catalyses XMP + L-glutamine + ATP + H2O = GMP + L-glutamate + AMP + diphosphate + 2 H(+). It participates in purine metabolism; GMP biosynthesis; GMP from XMP (L-Gln route): step 1/1. Its function is as follows. Catalyzes the synthesis of GMP from XMP. This chain is GMP synthase [glutamine-hydrolyzing], found in Coxiella burnetii (strain CbuG_Q212) (Coxiella burnetii (strain Q212)).